Here is a 133-residue protein sequence, read N- to C-terminus: Small ribosomal subunit protein uS8 (133 aa).

This sequence belongs to the universal ribosomal protein uS8 family. Part of the 30S ribosomal subunit. Contacts proteins S5 and S12.

Its function is as follows. One of the primary rRNA binding proteins, it binds directly to 16S rRNA central domain where it helps coordinate assembly of the platform of the 30S subunit. The protein is Small ribosomal subunit protein uS8 of Chlamydia pneumoniae (Chlamydophila pneumoniae).